Consider the following 962-residue polypeptide: Putative primase C962R (962 aa).

The region spanning 607-775 (ELDARLWIMF…PDPNNSYEKK (169 aa)) is the SF3 helicase domain. 636-643 (GGGCNGKT) serves as a coordination point for ATP.

The protein belongs to the asfivirus helicase C962R family.

The polypeptide is Putative primase C962R (African swine fever virus (isolate Pig/Kenya/KEN-50/1950) (ASFV)).